A 1122-amino-acid polypeptide reads, in one-letter code: Midnolin homolog (1122 aa).

The Ubiquitin-like domain occupies 69 to 143 (INLNISTTTG…IILIPNVETG (75 aa)). The required for interaction with Pc stretch occupies residues 210–300 (GGASGSSINA…SGQRSSGRIG (91 aa)). 8 disordered regions span residues 257 to 399 (VGGS…STLN), 596 to 630 (KHRHYHGQGHGHGHGNGHSSSSSSSSSSSSSHFFN), 645 to 677 (FATSSSSSSSSPSSSSSSPSKRRKLEQGMGAGA), 746 to 775 (GVVSSGRSSSSGATSSGAASGEEAPRKSGS), 840 to 876 (APTTGSVSGSGSGSGSSGSSSTTSSGSGLHHGSRSKM), 886 to 905 (KCNSRAQQQQQQSATLASGS), 922 to 955 (AATKASTSSKSSSHSCCQTAEAPSSMTSQSNGCT), and 1067 to 1122 (AAPA…DTAA). Low complexity predominate over residues 266 to 298 (SGTSSSSSSTSSSSSSSSSSSRTRSSGQRSSGR). 2 stretches are compositionally biased toward basic residues: residues 300–310 (GHGHVHSHQHP) and 321–352 (SHGHGHGHSHGNGHGHHHHHHHHHHHHHHHHN). Low complexity predominate over residues 375-397 (PSSSGASGSAPATGTGQSQSSST). The span at 596-610 (KHRHYHGQGHGHGHG) shows a compositional bias: basic residues. Composition is skewed to low complexity over residues 612 to 627 (GHSSSSSSSSSSSSSH), 648 to 663 (SSSSSSSSPSSSSSSP), 746 to 766 (GVVSSGRSSSSGATSSGAASG), 856 to 867 (SGSSSTTSSGSG), 889 to 903 (SRAQQQQQQSATLAS), and 922 to 936 (AATKASTSSKSSSHS). Polar residues-rich tracts occupy residues 937–954 (CCQTAEAPSSMTSQSNGC) and 1071–1085 (NSITGNSSNANVNGN). The segment covering 1086-1107 (TSTAPATAATSAAAAPTAAPPS) has biased composition (low complexity).

Interacts with PRC1 complex member polycomb protein Pc; the interaction targets Pc for ubiquitin-independent proteasomal degradation. Does not interact with PRC1 members Ph, Psc or Sce so does not appear to be a member of the PRC1 complex. Interacts with 26S proteasome regulatory subunit Rpn10.

Its subcellular location is the nucleus. Functionally, facilitates ubiquitin-independent proteasomal degradation of polycomb protein Pc by interacting directly with the proteasome and recruiting Pc to it. This is Midnolin homolog from Drosophila melanogaster (Fruit fly).